The sequence spans 162 residues: Phosphopantetheine adenylyltransferase (162 aa).

Residue serine 9 coordinates substrate. ATP contacts are provided by residues 9-10 and histidine 17; that span reads SF. Residues lysine 41, leucine 73, and lysine 87 each coordinate substrate. ATP-binding positions include 88–90, glutamate 98, and 123–129; these read GLR and YAHLSSS.

It belongs to the bacterial CoaD family. In terms of assembly, homohexamer. The cofactor is Mg(2+).

It is found in the cytoplasm. It catalyses the reaction (R)-4'-phosphopantetheine + ATP + H(+) = 3'-dephospho-CoA + diphosphate. It participates in cofactor biosynthesis; coenzyme A biosynthesis; CoA from (R)-pantothenate: step 4/5. In terms of biological role, reversibly transfers an adenylyl group from ATP to 4'-phosphopantetheine, yielding dephospho-CoA (dPCoA) and pyrophosphate. This is Phosphopantetheine adenylyltransferase from Symbiobacterium thermophilum (strain DSM 24528 / JCM 14929 / IAM 14863 / T).